The chain runs to 760 residues: uncharacterized protein (760 aa).

The first 23 residues, 1 to 23 (MVIKKGFFALSSCTLGLGLILTA), serve as a signal peptide directing secretion. Cys24 carries the N-palmitoyl cysteine lipid modification. A lipid anchor (S-diacylglycerol cysteine) is attached at Cys24. 2 disordered regions span residues 220-262 (ANGK…NSDN) and 443-482 (YEIK…NQTS). Polar residues-rich tracts occupy residues 222 to 257 (GKTT…SQDA) and 448 to 472 (PTNS…GKEQ).

It belongs to the MG185/MG260 family.

It localises to the cell membrane. This is an uncharacterized protein from Mycoplasma pneumoniae (strain ATCC 29342 / M129 / Subtype 1) (Mycoplasmoides pneumoniae).